The chain runs to 202 residues: Guanylate kinase (202 aa).

A Guanylate kinase-like domain is found at 3 to 181; that stretch reads GNLFVVAAPS…ALDDLRAVVR (179 aa). 10-17 serves as a coordination point for ATP; sequence APSGAGKT.

The protein belongs to the guanylate kinase family.

The protein resides in the cytoplasm. The enzyme catalyses GMP + ATP = GDP + ADP. Its function is as follows. Essential for recycling GMP and indirectly, cGMP. In Dechloromonas aromatica (strain RCB), this protein is Guanylate kinase.